The primary structure comprises 186 residues: Protein GrpE (186 aa).

The span at 1-15 (MADEQQTLDQQTPEQ) shows a compositional bias: polar residues. The segment at 1–20 (MADEQQTLDQQTPEQPTGAA) is disordered.

It belongs to the GrpE family. Homodimer.

It is found in the cytoplasm. Participates actively in the response to hyperosmotic and heat shock by preventing the aggregation of stress-denatured proteins, in association with DnaK and GrpE. It is the nucleotide exchange factor for DnaK and may function as a thermosensor. Unfolded proteins bind initially to DnaJ; upon interaction with the DnaJ-bound protein, DnaK hydrolyzes its bound ATP, resulting in the formation of a stable complex. GrpE releases ADP from DnaK; ATP binding to DnaK triggers the release of the substrate protein, thus completing the reaction cycle. Several rounds of ATP-dependent interactions between DnaJ, DnaK and GrpE are required for fully efficient folding. This chain is Protein GrpE, found in Pseudomonas aeruginosa (strain LESB58).